The following is a 315-amino-acid chain: Glycine--tRNA ligase alpha subunit (315 aa).

The protein belongs to the class-II aminoacyl-tRNA synthetase family. Tetramer of two alpha and two beta subunits.

The protein localises to the cytoplasm. It catalyses the reaction tRNA(Gly) + glycine + ATP = glycyl-tRNA(Gly) + AMP + diphosphate. The sequence is that of Glycine--tRNA ligase alpha subunit from Sorangium cellulosum (strain So ce56) (Polyangium cellulosum (strain So ce56)).